We begin with the raw amino-acid sequence, 786 residues long: Keratin, type I cytoskeletal 9 (786 aa).

A disordered region spans residues 1–21; it reads MNCRQFLSSHCSRDSSGGGGG. The interval 1 to 136 is head; sequence MNCRQFLSSH…SGAGGILGAD (136 aa). Residue Ser-52 is modified to Phosphoserine. The tract at residues 137–172 is coil 1A; the sequence is EKTTMQDLNSRLASYLDKVQALEDANKELESKIREW. An IF rod domain is found at 137 to 449; it reads EKTTMQDLNS…SLLEGGQEDF (313 aa). Positions 173–191 are linker 1; the sequence is YDKQGSRTFHRDYSPYYDT. The coil 1B stretch occupies residues 192–283; it reads IEDLKNQIVN…KNHEDEMSQL (92 aa). Residues 284–306 are linker 12; the sequence is TGQNSGDVNVEMNAAPGRDLTKI. Positions 307–445 are coil 2; sequence LNDMREEYER…KTYRSLLEGG (139 aa). The tail stretch occupies residues 446 to 760; the sequence is QEDFESHESG…GGGSGSKGGS (315 aa). Residues 447–786 are disordered; that stretch reads EDFESHESGQ…DDTQGYHIQY (340 aa). 2 stretches are compositionally biased toward gly residues: residues 460–657 and 664–761; these read GSGG…GGSG and SSSG…GGSG. The segment covering 762 to 773 has biased composition (low complexity); it reads RSSQVQSSSSKS.

It belongs to the intermediate filament family. Heterotetramer of two type I and two type II keratins.

In terms of biological role, may serve an important special function either in the mature palmar and plantar skin tissue or in the morphogenetic program of the formation of these tissues. Plays a role in keratin filament assembly. This Canis lupus familiaris (Dog) protein is Keratin, type I cytoskeletal 9.